The chain runs to 414 residues: MPRASALLTSDPRHQFTCCLCLHVRTGTIIFGITQIIIQLIFISFLFLMTFNPRLFPEDNHGSLDSSQANARYYVLSALFRLVPAVSDIHESLTFPSFPEVRNVNDNKLLFGHNSESEVNFNFDISSGYKDSVPIDMSHSPSRLMSETHKRERGSREIKIRQFSPYIAVCVTTFSLAFCCFMVHGAITRQPTHLLPFFFIQVFDLIICLIHILGFMSSTSDIRLMIHTKTGPIYIKSTGLAFIILSISCMMLAFKAYCLGMVWDCYKYLMLNRRNNVLNEWYSDQWGHFSTFWSLLRAGRNRGNNLTGNLDSANESNTRAHPDPVTYDPSNDLPKYDDILKIPANAYAPPPYYCSNINGNGNLTQANAVTANTTSTNVSTFTTTTTTANTTTNVTSANKNDAEVTSTPSNVHPC.

The Cytoplasmic portion of the chain corresponds to 1 to 28 (MPRASALLTSDPRHQFTCCLCLHVRTGT). The chain crosses the membrane as a helical span at residues 29-49 (IIFGITQIIIQLIFISFLFLM). Over 50–166 (TFNPRLFPED…EIKIRQFSPY (117 aa)) the chain is Extracellular. A helical transmembrane segment spans residues 167-187 (IAVCVTTFSLAFCCFMVHGAI). Residues 188 to 194 (TRQPTHL) are Cytoplasmic-facing. A helical transmembrane segment spans residues 195-215 (LPFFFIQVFDLIICLIHILGF). The Extracellular segment spans residues 216 to 241 (MSSTSDIRLMIHTKTGPIYIKSTGLA). Residues 242–262 (FIILSISCMMLAFKAYCLGMV) traverse the membrane as a helical segment. The Cytoplasmic segment spans residues 263 to 414 (WDCYKYLMLN…TSTPSNVHPC (152 aa)). The segment at 306–328 (LTGNLDSANESNTRAHPDPVTYD) is disordered.

As to quaternary structure, interacts (via N-terminal extracellular domain) with human C2a. Post-translationally, phosphorylated on tyrosine residues.

It is found in the cell membrane. Its function is as follows. Cell surface receptor that binds to human complement C2a protein. This results in inhibition of the classical and lectin pathways of complement activation, probably due to interference with binding of C2a to C4b and interference with cleavage by C1 or MASP2 such that C3 convertase cannot be formed. This infers resistance to complement-mediated cell lysis, allowing parasite survival and infection. This is Tetraspanning orphan receptor from Schistosoma japonicum (Blood fluke).